Reading from the N-terminus, the 154-residue chain is Protein-export protein SecB (154 aa).

It belongs to the SecB family. In terms of assembly, homotetramer, a dimer of dimers. One homotetramer interacts with 1 SecA dimer.

The protein localises to the cytoplasm. Its function is as follows. One of the proteins required for the normal export of preproteins out of the cell cytoplasm. It is a molecular chaperone that binds to a subset of precursor proteins, maintaining them in a translocation-competent state. It also specifically binds to its receptor SecA. The chain is Protein-export protein SecB from Vibrio cholerae serotype O1 (strain ATCC 39541 / Classical Ogawa 395 / O395).